Here is a 436-residue protein sequence, read N- to C-terminus: UDP-N-acetylmuramoylalanine--D-glutamate ligase (436 aa).

Residue 112-118 coordinates ATP; it reads GSNGKST.

This sequence belongs to the MurCDEF family.

The protein resides in the cytoplasm. It carries out the reaction UDP-N-acetyl-alpha-D-muramoyl-L-alanine + D-glutamate + ATP = UDP-N-acetyl-alpha-D-muramoyl-L-alanyl-D-glutamate + ADP + phosphate + H(+). It participates in cell wall biogenesis; peptidoglycan biosynthesis. Cell wall formation. Catalyzes the addition of glutamate to the nucleotide precursor UDP-N-acetylmuramoyl-L-alanine (UMA). The sequence is that of UDP-N-acetylmuramoylalanine--D-glutamate ligase from Photorhabdus laumondii subsp. laumondii (strain DSM 15139 / CIP 105565 / TT01) (Photorhabdus luminescens subsp. laumondii).